The chain runs to 203 residues: LexA repressor (203 aa).

The H-T-H motif DNA-binding region spans V28–K48. Active-site for autocatalytic cleavage activity residues include S122 and K159.

Belongs to the peptidase S24 family. In terms of assembly, homodimer.

It carries out the reaction Hydrolysis of Ala-|-Gly bond in repressor LexA.. Its function is as follows. Represses a number of genes involved in the response to DNA damage (SOS response), including recA and lexA. In the presence of single-stranded DNA, RecA interacts with LexA causing an autocatalytic cleavage which disrupts the DNA-binding part of LexA, leading to derepression of the SOS regulon and eventually DNA repair. This is LexA repressor from Desulfatibacillum aliphaticivorans.